Here is a 235-residue protein sequence, read N- to C-terminus: Protocatechuate 3,4-dioxygenase beta chain (235 aa).

Positions 107, 146, 159, and 161 each coordinate Fe cation.

This sequence belongs to the intradiol ring-cleavage dioxygenase family. As to quaternary structure, the enzyme is an oligomer of 12 copies of the alpha and beta chains. It depends on Fe(3+) as a cofactor.

It carries out the reaction 3,4-dihydroxybenzoate + O2 = 3-carboxy-cis,cis-muconate + 2 H(+). Its pathway is aromatic compound metabolism; beta-ketoadipate pathway; 3-carboxy-cis,cis-muconate from 3,4-dihydroxybenzoate: step 1/1. In terms of biological role, plays an essential role in the utilization of numerous aromatic and hydroaromatic compounds via the beta-ketoadipate pathway. This chain is Protocatechuate 3,4-dioxygenase beta chain (pcaH), found in Burkholderia cepacia (Pseudomonas cepacia).